The following is a 696-amino-acid chain: DNA-directed RNA polymerase subunit beta N-terminal section (696 aa).

This sequence belongs to the RNA polymerase beta chain family. As to quaternary structure, in plastids the minimal PEP RNA polymerase catalytic core is composed of four subunits: alpha, beta, beta', and beta''. When a (nuclear-encoded) sigma factor is associated with the core the holoenzyme is formed, which can initiate transcription.

It localises to the plastid. It is found in the chloroplast. It carries out the reaction RNA(n) + a ribonucleoside 5'-triphosphate = RNA(n+1) + diphosphate. Functionally, DNA-dependent RNA polymerase catalyzes the transcription of DNA into RNA using the four ribonucleoside triphosphates as substrates. This chain is DNA-directed RNA polymerase subunit beta N-terminal section (rpoB1), found in Stigeoclonium helveticum (Green alga).